The sequence spans 331 residues: Biotin synthase (331 aa).

In terms of domain architecture, Radical SAM core spans 48–278; that stretch reads FDSQKFEFCS…SAELRLCGGR (231 aa). Positions 66, 70, and 73 each coordinate [4Fe-4S] cluster. Residues C110, C143, C203, and R273 each contribute to the [2Fe-2S] cluster site.

It belongs to the radical SAM superfamily. Biotin synthase family. Homodimer. The cofactor is [4Fe-4S] cluster. It depends on [2Fe-2S] cluster as a cofactor.

The catalysed reaction is (4R,5S)-dethiobiotin + (sulfur carrier)-SH + 2 reduced [2Fe-2S]-[ferredoxin] + 2 S-adenosyl-L-methionine = (sulfur carrier)-H + biotin + 2 5'-deoxyadenosine + 2 L-methionine + 2 oxidized [2Fe-2S]-[ferredoxin]. Its pathway is cofactor biosynthesis; biotin biosynthesis; biotin from 7,8-diaminononanoate: step 2/2. Functionally, catalyzes the conversion of dethiobiotin (DTB) to biotin by the insertion of a sulfur atom into dethiobiotin via a radical-based mechanism. The protein is Biotin synthase of Hydrogenobaculum sp. (strain Y04AAS1).